The primary structure comprises 252 residues: tRNA (guanine-N(1)-)-methyltransferase (252 aa).

Residues Gly-113 and 133–138 contribute to the S-adenosyl-L-methionine site; that span reads IGDYVL. The span at 229-238 shows a compositional bias: low complexity; that stretch reads VARPAANAPA. Positions 229–252 are disordered; sequence VARPAANAPAKGESQKTPKNKTDG. Basic and acidic residues predominate over residues 241 to 252; that stretch reads ESQKTPKNKTDG.

This sequence belongs to the RNA methyltransferase TrmD family. Homodimer.

It is found in the cytoplasm. The catalysed reaction is guanosine(37) in tRNA + S-adenosyl-L-methionine = N(1)-methylguanosine(37) in tRNA + S-adenosyl-L-homocysteine + H(+). Its function is as follows. Specifically methylates guanosine-37 in various tRNAs. In Rhodopseudomonas palustris (strain HaA2), this protein is tRNA (guanine-N(1)-)-methyltransferase.